The sequence spans 476 residues: Glycogen synthase (476 aa).

Residue Lys15 coordinates ADP-alpha-D-glucose.

This sequence belongs to the glycosyltransferase 1 family. Bacterial/plant glycogen synthase subfamily.

It carries out the reaction [(1-&gt;4)-alpha-D-glucosyl](n) + ADP-alpha-D-glucose = [(1-&gt;4)-alpha-D-glucosyl](n+1) + ADP + H(+). It functions in the pathway glycan biosynthesis; glycogen biosynthesis. Synthesizes alpha-1,4-glucan chains using ADP-glucose. The protein is Glycogen synthase of Streptococcus equi subsp. equi (strain 4047).